The primary structure comprises 842 residues: MSYYWVALVLFTAQAFSIEGDRSASYQEKCISRRLINHYQLNKEIFGVGMCDGNNENEFRQKRRIVPTFQGNPRPRGELLASKFHVNSYNFEQTNSLVGLVNKIAQEYLNKCPPVIYYDSFVEKSDGLILENLFKTIPITFYHGEINADYEAKNKRFTSHIDCNCKSYILFLSDPLMTRKILGPQTESRVVLVSRSTQWRLRDFLSSELSSNIVNLLVIGESLMADPMRERPYVLYTHKLYADGLGSNTPVVLTSWIKGALSRPHINLFPSKFQFGFAGHRFQISAANQPPFIFRIRTLDSSGMGQLRWDGVEFRLLTMISKRLNFSIDITETPTRSNTRGVVDTIQEQIIERTVDIGMSGIYITQERLMDSAMSVGHSPDCAAFITLASKALPKYRAIMGPFQWPVWVALICVYLGGIFPIVFTDRLTLSHLMGNWGEVENMFWYVFGMFTNAFSFTGKYSWSNTRKNSTRLLIGAYWLFTIIITSCYTGSIIAFVTLPAFPDTVDSVLDLLGLFFRVGTLNNGGWETWFQNSTHIPTSRLYKKMEFVGSVDEGIGNVTQSFFWNYAFLGSKAQLEYLVQSNFSDENISRRSALHLSEECFALFQIGFLFPRESVYKIKIDSMILLAQQSGLIAKINNEVSWVMQRSSSGRLLQASSSNSLREIIQEERQLTTADTEGMFLLMALGYFLGATALVSEIVGGITNKCRQIIKRSRKSAASSWSSASSGSMLRTNAEQLSHDKRKANRREAAEVAQKMSFGMRELNLTRATLREIYGSYGAPETDHGQLDIVHTEFPNSSAKLNNIEDEESREALESLQRLDEFMDQMDNDGNPSSHTFRIDN.

A signal peptide spans 1 to 15; that stretch reads MSYYWVALVLFTAQA. An N-linked (GlcNAc...) asparagine glycan is attached at N325. 2 consecutive transmembrane segments (helical) span residues 405 to 425 and 437 to 457; these read WPVW…IVFT and WGEV…AFSF. N469 is a glycosylation site (N-linked (GlcNAc...) asparagine). Residues 479-499 form a helical membrane-spanning segment; it reads WLFTIIITSCYTGSIIAFVTL. Residues N533, N558, N583, and N588 are each glycosylated (N-linked (GlcNAc...) asparagine). Residues 680–700 traverse the membrane as a helical segment; that stretch reads MFLLMALGYFLGATALVSEIV. Positions 722-745 are disordered; the sequence is WSSASSGSMLRTNAEQLSHDKRKA. 2 N-linked (GlcNAc...) asparagine glycosylation sites follow: N765 and N797.

Belongs to the glutamate-gated ion channel (TC 1.A.10.1) family. Expressed in the dorsal organ cool cells. In the antenna, expressed in approximately six neurons in the arista as well as five to ten neurons near the third chamber of the sacculus.

Its subcellular location is the cell membrane. Functionally, integral part of a neural sensory system in the antenna that provides the neural basis for the response to environmental changes in temperature (thermosensation). Together with Ir25a and Ir93a, mediates the response of the dorsal organ cool cells, a trio of cool-responsive neurons, to cooling and is required for cool avoidance behavior. This Drosophila melanogaster (Fruit fly) protein is Ionotropic receptor 21a.